We begin with the raw amino-acid sequence, 391 residues long: Transmembrane protein 79 (391 aa).

Positions 1–114 (MTEPETLALL…TKSEEPFKED (114 aa)) are disordered. Over 1 to 200 (MTEPETLALL…GREALRAVAS (200 aa)) the chain is Cytoplasmic. A compositionally biased stretch (basic and acidic residues) spans 103 to 114 (APTKSEEPFKED). Residues 201–221 (VVAALIFFPCLLYGAYAFLPF) form a helical membrane-spanning segment. Residues 222–240 (DAPRLPTMSSRLVYTLRCG) are Extracellular-facing. A helical transmembrane segment spans residues 241–261 (VFATFPIVLGLLVYGLSLLCF). Residues 262–279 (SALRPFGEPRREVEIHRQ) lie on the Cytoplasmic side of the membrane. A helical transmembrane segment spans residues 280-300 (YVAQSVQLFILYFFNLAVLST). At 301 to 309 (YLPQDTLKL) the chain is on the extracellular side. Residues 310 to 330 (LPLLTGLFAISRLIYWLTFAV) traverse the membrane as a helical segment. At 331 to 339 (GRSFRGFGY) the chain is on the cytoplasmic side. The helical transmembrane segment at 340–360 (GLTFLPLLAMLVWNLYYMFVV) threads the bilayer. The Extracellular segment spans residues 361–391 (EPERMLTASESRLDYPDHARSVSDYRPRSWG).

As to expression, expressed in the epidermis of the skin. Expressed in epithelial cells of the outermost layer of the stratum granulosum (SG) and in hair follicles (at protein level).

It is found in the lysosome. The protein localises to the golgi apparatus. The protein resides in the trans-Golgi network. Its subcellular location is the membrane. Its function is as follows. Contributes to the epidermal integrity and skin barrier function. Plays a role in the lamellar granule (LG) secretory system and in the stratum corneum (SC) epithelial cell formation. This is Transmembrane protein 79 (Tmem79) from Mus musculus (Mouse).